Reading from the N-terminus, the 551-residue chain is Probable malate:quinone oxidoreductase (551 aa).

The span at 525 to 544 (QTAAAAPQAQPQLKPQPDAK) shows a compositional bias: low complexity. The tract at residues 525–551 (QTAAAAPQAQPQLKPQPDAKPVADIAL) is disordered.

This sequence belongs to the MQO family. FAD is required as a cofactor.

It carries out the reaction (S)-malate + a quinone = a quinol + oxaloacetate. The protein operates within carbohydrate metabolism; tricarboxylic acid cycle; oxaloacetate from (S)-malate (quinone route): step 1/1. The protein is Probable malate:quinone oxidoreductase of Enterobacter sp. (strain 638).